A 336-amino-acid polypeptide reads, in one-letter code: Phosphate acetyltransferase (336 aa).

Belongs to the phosphate acetyltransferase and butyryltransferase family.

It is found in the cytoplasm. The catalysed reaction is acetyl-CoA + phosphate = acetyl phosphate + CoA. It functions in the pathway metabolic intermediate biosynthesis; acetyl-CoA biosynthesis; acetyl-CoA from acetate: step 2/2. The chain is Phosphate acetyltransferase (pta) from Treponema pallidum (strain Nichols).